Consider the following 232-residue polypeptide: Uracil-DNA glycosylase (232 aa).

The active-site Proton acceptor is the Asp66.

This sequence belongs to the uracil-DNA glycosylase (UDG) superfamily. UNG family.

It is found in the cytoplasm. It carries out the reaction Hydrolyzes single-stranded DNA or mismatched double-stranded DNA and polynucleotides, releasing free uracil.. Its function is as follows. Excises uracil residues from the DNA which can arise as a result of misincorporation of dUMP residues by DNA polymerase or due to deamination of cytosine. The polypeptide is Uracil-DNA glycosylase (Lactobacillus helveticus (strain DPC 4571)).